The primary structure comprises 459 residues: MSNPQQQFISDELSQLQKEIISKNPQDVLQFCANYFNTKLQAQRSELWSQQAKAEAAGIDLFPSVDHVNVNSSGVSIVNDRQPSFKSPFGVNDPHSNHDEDPHAKDTKTDTAAAAVGGGIFKSNFDVKKSASNPPTKEVDPDDPSKPSSSSQPNQQSASASSKTPSSKIPVAFNANRRTSVSAEALNPAKLKLDSWKPPVNNLSITEEETLANNLKNNFLFKQLDANSKKTVIAALQQKSFAKDTVIIQQGDEGDFFYIIETGTVDFYVNDAKVSSSSEGSSFGELALMYNSPRAATAVAATDVVCWALDRLTFRRILLEGTFNKRLMYEDFLKDIEVLKSLSDHARSKLADALSTEMYHKGDKIVTEGEQGENFYLIESGNCQVYNEKLGNIKQLTKGDYFGELALIKDLPRQATVEALDNVIVATLGKSGFQRLLGPVVEVLKEQDPTKSQDPTAGH.

Positions 30–219 are dimerization and phosphorylation; the sequence is QFCANYFNTK…TLANNLKNNF (190 aa). Disordered stretches follow at residues 78 to 109 and 125 to 168; these read VNDR…DTKT and FDVK…PSSK. The span at 95 to 109 shows a compositional bias: basic and acidic residues; sequence HSNHDEDPHAKDTKT. The segment covering 146–168 has biased composition (low complexity); sequence KPSSSSQPNQQSASASSKTPSSK. Phosphoserine is present on S180. Residues 220 to 335, E285, R294, 338 to 454, E404, and R413 contribute to the 3',5'-cyclic AMP site; these read LFKQ…FLKD and VLKS…KSQD.

This sequence belongs to the cAMP-dependent kinase regulatory chain family. As to quaternary structure, tetramer, composed of 2 regulatory (R) and 2 catalytic (C) subunits. In the presence of cAMP it dissociates into 2 active monomeric C subunits and an R dimer.

This chain is cAMP-dependent protein kinase regulatory subunit (BCY1), found in Candida albicans (strain SC5314 / ATCC MYA-2876) (Yeast).